Reading from the N-terminus, the 310-residue chain is Pantothenate kinase (310 aa).

95–102 (GSVAVGKS) lines the ATP pocket.

This sequence belongs to the prokaryotic pantothenate kinase family.

It localises to the cytoplasm. It carries out the reaction (R)-pantothenate + ATP = (R)-4'-phosphopantothenate + ADP + H(+). It participates in cofactor biosynthesis; coenzyme A biosynthesis; CoA from (R)-pantothenate: step 1/5. The polypeptide is Pantothenate kinase (Rhodococcus erythropolis (strain PR4 / NBRC 100887)).